Consider the following 163-residue polypeptide: 3-isopropylmalate dehydratase small subunit (163 aa).

The protein belongs to the LeuD family. LeuD type 2 subfamily. As to quaternary structure, heterodimer of LeuC and LeuD.

It catalyses the reaction (2R,3S)-3-isopropylmalate = (2S)-2-isopropylmalate. It participates in amino-acid biosynthesis; L-leucine biosynthesis; L-leucine from 3-methyl-2-oxobutanoate: step 2/4. In terms of biological role, catalyzes the isomerization between 2-isopropylmalate and 3-isopropylmalate, via the formation of 2-isopropylmaleate. This Endomicrobium trichonymphae protein is 3-isopropylmalate dehydratase small subunit.